A 300-amino-acid chain; its full sequence is Ribosomal protein bS6--L-glutamate ligase (300 aa).

Positions 104–287 (LQLLARQGID…IAGRMIQWIE (184 aa)) constitute an ATP-grasp domain. ATP-binding positions include Lys141, 178 to 179 (EY), Asp187, and 211 to 213 (RSN). The Mg(2+) site is built by Asp248, Glu260, and Asn262. Positions 248, 260, and 262 each coordinate Mn(2+).

This sequence belongs to the RimK family. Requires Mg(2+) as cofactor. Mn(2+) is required as a cofactor.

Functionally, an L-glutamate ligase that catalyzes the ATP-dependent post-translational addition of glutamate residues to the C-terminus of ribosomal protein bS6 (RpsF). Is also able to catalyze the synthesis of poly-alpha-glutamate in vitro, via ATP hydrolysis from unprotected glutamate as substrate. The number of glutamate residues added to either RpsF or to poly-alpha-glutamate changes with pH. This chain is Ribosomal protein bS6--L-glutamate ligase, found in Salmonella schwarzengrund (strain CVM19633).